The chain runs to 270 residues: Purine nucleoside phosphorylase BT_4389 (270 aa).

3 residues coordinate Zn(2+): His-79, Cys-124, and His-141.

Belongs to the purine nucleoside phosphorylase YfiH/LACC1 family. As to quaternary structure, homodimer. Cu(2+) serves as cofactor. It depends on Zn(2+) as a cofactor.

It carries out the reaction adenosine + phosphate = alpha-D-ribose 1-phosphate + adenine. It catalyses the reaction S-methyl-5'-thioadenosine + phosphate = 5-(methylsulfanyl)-alpha-D-ribose 1-phosphate + adenine. The enzyme catalyses inosine + phosphate = alpha-D-ribose 1-phosphate + hypoxanthine. The catalysed reaction is adenosine + H2O + H(+) = inosine + NH4(+). Purine nucleoside enzyme that catalyzes the phosphorolysis of adenosine and inosine nucleosides, yielding D-ribose 1-phosphate and the respective free bases, adenine and hypoxanthine. Also catalyzes the phosphorolysis of S-methyl-5'-thioadenosine into adenine and S-methyl-5-thio-alpha-D-ribose 1-phosphate. Also has adenosine deaminase activity. The polypeptide is Purine nucleoside phosphorylase BT_4389 (Bacteroides thetaiotaomicron (strain ATCC 29148 / DSM 2079 / JCM 5827 / CCUG 10774 / NCTC 10582 / VPI-5482 / E50)).